A 275-amino-acid polypeptide reads, in one-letter code: Tumor necrosis factor receptor superfamily member 14 (275 aa).

The signal sequence occupies residues 1-38 (MEPLPGWGSAPWSQAPTDNTFRLVPCVFLLNLLQRISA). TNFR-Cys repeat units lie at residues 41 to 75 (SCRQ…GTVC), 77 to 119 (PCPP…DTVC), and 120 to 162 (RCIP…DTVC). Cystine bridges form between cysteine 42–cysteine 53, cysteine 54–cysteine 67, cysteine 57–cysteine 75, cysteine 78–cysteine 93, cysteine 96–cysteine 111, cysteine 99–cysteine 119, cysteine 121–cysteine 138, and cysteine 144–cysteine 162. N-linked (GlcNAc...) asparagine glycosylation is found at asparagine 184 and asparagine 197. Residues 211–231 (VVSILLPLVIVGAGIAGFLIC) traverse the membrane as a helical segment.

The protein belongs to the tumor necrosis factor receptor superfamily. Interacts with TRAF2, TRAF3 and TRAF5. Interacts (via CRD1/TNFR-Cys 1) with CD160; this interaction is direct. Interacts (via CRD1/TNFR-Cys 1) with BTLA; this interaction is direct. In terms of processing, N-glycosylated. Expressed at mucosal sites including colon and pulmonary epithelial cells. Expressed in naive T cells.

The protein resides in the cell membrane. In terms of biological role, receptor for four distinct ligands: The TNF superfamily members TNFSF14/LIGHT and homotrimeric LTA/lymphotoxin-alpha and the immunoglobulin superfamily members BTLA and CD160, altogether defining a complex stimulatory and inhibitory signaling network. Signals via the TRAF2-TRAF3 E3 ligase pathway to promote immune cell survival and differentiation. Participates in bidirectional cell-cell contact signaling between antigen presenting cells and lymphocytes. In response to ligation of TNFSF14/LIGHT, delivers costimulatory signals to T cells, promoting cell proliferation and effector functions. Interacts with CD160 on NK cells, enhancing IFNG production and anti-tumor immune response. In the context of bacterial infection, acts as a signaling receptor on epithelial cells for CD160 from intraepithelial lymphocytes, triggering the production of antimicrobial proteins and pro-inflammatory cytokines. Upon binding to CD160 on activated CD4+ T cells, down-regulates CD28 costimulatory signaling, restricting memory and alloantigen-specific immune response. May interact in cis (on the same cell) or in trans (on other cells) with BTLA. In cis interactions, appears to play an immune regulatory role inhibiting in trans interactions in naive T cells to maintain a resting state. In trans interactions, can predominate during adaptive immune response to provide survival signals to effector T cells. This is Tumor necrosis factor receptor superfamily member 14 from Mus musculus (Mouse).